The following is a 437-amino-acid chain: Endoplasmic reticulum protein SC65 (437 aa).

Positions 1–18 (MARVAWGLLWLLLGSAGA) are cleaved as a signal peptide. N-linked (GlcNAc...) asparagine glycosylation is present at N361. 2 stretches are compositionally biased toward acidic residues: residues 381–413 (DEME…EEGM) and 428–437 (AEAEPEPELA). Positions 381 to 437 (DEMELEETEPPLEPEDALSDAEFEGEGDYEEGMYADWWQEPDAKGDEAEAEPEPELA) are disordered.

The protein belongs to the leprecan family. In terms of assembly, interacts with PLOD1, P3H3 and PPIB. Identified in a complex with PLOD1 and P3H3. As to expression, detected in fibroblasts (at protein level). Detected in spleen, prostate, testis, ovary, colon, pancreas, kidney, placenta and heart.

It localises to the endoplasmic reticulum. Functionally, part of a complex composed of PLOD1, P3H3 and P3H4 that catalyzes hydroxylation of lysine residues in collagen alpha chains and is required for normal assembly and cross-linking of collagen fibrils. Required for normal bone density and normal skin stability via its role in hydroxylation of lysine residues in collagen alpha chains and in collagen fibril assembly. In Homo sapiens (Human), this protein is Endoplasmic reticulum protein SC65.